A 326-amino-acid chain; its full sequence is Vitamin B12 import system permease protein BtuC (326 aa).

Transmembrane regions (helical) follow at residues 17–39, 59–81, 88–107, 111–133, 146–168, 188–205, 242–264, 274–296, and 303–322; these read LSLS…QWIA, RTLA…QALF, PGLL…AVLL, QLPG…LILL, LLAG…YFST, WQQS…IWIC, MVGV…PHIL, VLLP…VARL, and LPIG…WLLL.

It belongs to the binding-protein-dependent transport system permease family. FecCD subfamily. In terms of assembly, the complex is composed of two ATP-binding proteins (BtuD), two transmembrane proteins (BtuC) and a solute-binding protein (BtuF).

Its subcellular location is the cell inner membrane. Its function is as follows. Part of the ABC transporter complex BtuCDF involved in vitamin B12 import. Involved in the translocation of the substrate across the membrane. The protein is Vitamin B12 import system permease protein BtuC of Salmonella typhi.